Consider the following 379-residue polypeptide: EP300-interacting inhibitor of differentiation 3 (379 aa).

The stretch at 32–58 forms a coiled coil; sequence LKQVEEEEEVEALKVEVAAASDTESDT.

It belongs to the NSE4 family. As to quaternary structure, component of the SMC5-SMC6 complex which consists at least of SMC5, SMC6, NSMCE2, NSMCE1, NSMCE4A or EID3 and NSMCE3. NSMCE1, NSMCE4A or EID3 and NSMCE3 probably form a subcomplex that bridges the head domains of the SMC5:SMC6 heterodimer. Homodimer, and heterodimer with EID2. Interacts with the C-terminal region of CREBBP.

It localises to the nucleus. The protein resides in the cytoplasm. The protein localises to the chromosome. Its subcellular location is the telomere. In terms of biological role, tissue-specific component of the SMC5-SMC6 complex, a complex involved in repair of DNA double-strand breaks by homologous recombination. The complex may promote sister chromatid homologous recombination by recruiting the SMC1-SMC3 cohesin complex to double-strand breaks. The complex is required for telomere maintenance via recombination and mediates sumoylation of shelterin complex (telosome) components. Functionally, acts as a repressor of nuclear receptor-dependent transcription possibly by interfering with CREBBP-dependent coactivation. May function as a coinhibitor of other CREBBP/EP300-dependent transcription factors. In Bos taurus (Bovine), this protein is EP300-interacting inhibitor of differentiation 3.